The chain runs to 506 residues: Carboxyl-terminal PDZ ligand of neuronal nitric oxide synthase protein (506 aa).

A PID domain is found at phenylalanine 26 to glycine 196. Disordered regions lie at residues histidine 175 to proline 224 and aspartate 241 to glutamate 260. 3 positions are modified to phosphoserine: serine 188, serine 192, and serine 195. Residues threonine 203–alanine 213 show a composition bias toward low complexity. The residue at position 266 (serine 266) is a Phosphoserine. Residues alanine 322–leucine 363 adopt a coiled-coil conformation. Phosphoserine occurs at positions 371, 374, 401, and 417. Residues glutamine 494–valine 506 form an interaction with NOS1 region. The short motif at isoleucine 504–valine 506 is the PDZ-binding element.

Interacts with the PDZ domain of NOS1 or the second PDZ domain of DLG4 through its C-terminus. Interacts with RASD1 and SYN1, SYN2 and SYN3 via its PID domain. Forms a ternary complex with NOS1 and RASD1. Forms a ternary complex with NOS1 and SYN1. As to expression, expressed in kidney glomeruli podocytes.

The protein resides in the cell projection. The protein localises to the filopodium. It is found in the podosome. Its function is as follows. Adapter protein involved in neuronal nitric-oxide (NO) synthesis regulation via its association with nNOS/NOS1. The complex formed with NOS1 and synapsins is necessary for specific NO and synapsin functions at a presynaptic level. Mediates an indirect interaction between NOS1 and RASD1 leading to enhance the ability of NOS1 to activate RASD1. Competes with DLG4 for interaction with NOS1, possibly affecting NOS1 activity by regulating the interaction between NOS1 and DLG4. In kidney podocytes, plays a role in podosomes and filopodia formation through CDC42 activation. The polypeptide is Carboxyl-terminal PDZ ligand of neuronal nitric oxide synthase protein (Homo sapiens (Human)).